A 111-amino-acid polypeptide reads, in one-letter code: UPF0060 membrane protein CPR_1507 (111 aa).

Transmembrane regions (helical) follow at residues 7–27 (IFYF…IWLW), 33–53 (SLIY…IPTL), 60–80 (FGRV…LCGW), and 85–105 (IIPD…VLII).

Belongs to the UPF0060 family.

Its subcellular location is the cell membrane. This chain is UPF0060 membrane protein CPR_1507, found in Clostridium perfringens (strain SM101 / Type A).